A 341-amino-acid chain; its full sequence is Brain-specific homeobox/POU domain protein 3 (341 aa).

The POU-IV box signature appears at 55-65 (RGAEALAAVDI). One can recognise a POU-specific domain in the interval 182 to 259 (ETETDPRELE…ILEAWLEEAE (78 aa)). Positions 277–336 (KKRKRTSIAAPEKRSLEAYFAVQPRPSSEKIAAIAEKLDLKKNVVRVWFCNQRQKQKRMK) form a DNA-binding region, homeobox.

It belongs to the POU transcription factor family. Class-4 subfamily.

The protein resides in the nucleus. Functionally, may play a role in specifying terminally differentiated neuronal phenotypes. The polypeptide is Brain-specific homeobox/POU domain protein 3 (BRN3) (Gallus gallus (Chicken)).